We begin with the raw amino-acid sequence, 191 residues long: NF-kappa-B inhibitor-interacting Ras-like protein 2 (191 aa).

Positions 1-191 are small GTPase-like; sequence MGKSCKVVVC…KNKGSGSLDG (191 aa). 11–18 lines the GTP pocket; it reads GQASVGKT. The Effector region motif lies at 35 to 43; sequence MIETQEDIY. Residues 61–65 and 120–123 each bind GTP; these read DTRGL and NKCD. Positions 169 to 191 are disordered; it reads TQPQSKSAFPLSRKNKGSGSLDG.

This sequence belongs to the small GTPase superfamily. Ras family. KappaB-Ras subfamily. As to quaternary structure, interacts with both NF-kappa-B inhibitor alpha (NFKBIA) and beta (NFKBIB) in vitro. However, it probably only interacts with NFKBIB in vivo. Interacts with GFOD1.

It localises to the cytoplasm. Functionally, atypical Ras-like protein that acts as a potent regulator of NF-kappa-B activity by preventing the degradation of NF-kappa-B inhibitor beta (NFKBIB) by most signals, explaining why NFKBIB is more resistant to degradation. May act by blocking phosphorylation of NFKBIB and nuclear localization of p65/RELA NF-kappa-B subunit. It is unclear whether it acts as a GTPase. Both GTP- and GDP-bound forms block phosphorylation of NFKBIB. The sequence is that of NF-kappa-B inhibitor-interacting Ras-like protein 2 (Nkiras2) from Mus musculus (Mouse).